The primary structure comprises 273 residues: Outer capsid protein VP7 (273 aa).

This sequence belongs to the aquareoviridae outer capsid VP7 protein family. Interacts with VP4 and VP6.

It localises to the virion. Functionally, interacts with VP4 to form the outer icosahedral capsid with an incomplete T=13 symmetry, about 80 nm in diameter, and consisting of 200 VP4-VP7 trimers. The protein is Outer capsid protein VP7 (S10) of Ctenopharyngodon idella (Grass carp).